The following is a 900-amino-acid chain: Phosphoenolpyruvate carboxylase (900 aa).

Residues His-140 and Lys-568 contribute to the active site.

The protein belongs to the PEPCase type 1 family. The cofactor is Mg(2+).

It carries out the reaction oxaloacetate + phosphate = phosphoenolpyruvate + hydrogencarbonate. Functionally, forms oxaloacetate, a four-carbon dicarboxylic acid source for the tricarboxylic acid cycle. This is Phosphoenolpyruvate carboxylase from Neisseria meningitidis serogroup A / serotype 4A (strain DSM 15465 / Z2491).